The sequence spans 317 residues: Hps1-dma1 cluster cytochrome P450 monooxygenase cyp3.1 (317 aa).

Residues 183-205 (PAIETDRKTSSHSRSPTALADKQ) are disordered. Cysteine 260 provides a ligand contact to heme.

The protein belongs to the cytochrome P450 family. Heme is required as a cofactor.

The protein operates within secondary metabolite biosynthesis. Cytochrome P450 monooxygenase; part of the hps1-dma1 gene cluster that probably mediates the biosynthesis a derivative of cyclopiazonic acid (CPA). The hybrid polyketide synthase-nonribosomal peptide synthetase (PKS-NRPS) nps1 might incorporates acetyl-CoA, malonyl-CoA, and tryptophan (Trp) and utilizes a C-terminal redox-incompetent reductase domain to make and release the tryptophan tetramic acid, cyclo-acetoacetyl-L-tryptophan (c-AATrp), as the first intermediate in the pathway. In addition, the cluster also includes the tryptophan dimethylallyltransferase dma1, the FAD-dependent oxidoreductase toxD, the cytochrome P450 monooxygenase cyp3.1 and the methyltransferase DOTSEDRAFT_139328; the latter 2 being not present in all CPA-producing fungi but involved in additional modifications that occur in biosynthesis the of a range of CPA and CPA-like products. Further studies are required to clarify whether the CPA-like hps1-dma1 cluster is functional or a non-functional relic reflecting evolution of D.septosporum. The polypeptide is Hps1-dma1 cluster cytochrome P450 monooxygenase cyp3.1 (cyp3.1) (Dothistroma septosporum (strain NZE10 / CBS 128990) (Red band needle blight fungus)).